A 256-amino-acid polypeptide reads, in one-letter code: 3-deoxy-manno-octulosonate cytidylyltransferase (256 aa).

Belongs to the KdsB family.

The protein resides in the cytoplasm. It carries out the reaction 3-deoxy-alpha-D-manno-oct-2-ulosonate + CTP = CMP-3-deoxy-beta-D-manno-octulosonate + diphosphate. Its pathway is nucleotide-sugar biosynthesis; CMP-3-deoxy-D-manno-octulosonate biosynthesis; CMP-3-deoxy-D-manno-octulosonate from 3-deoxy-D-manno-octulosonate and CTP: step 1/1. The protein operates within bacterial outer membrane biogenesis; lipopolysaccharide biosynthesis. Activates KDO (a required 8-carbon sugar) for incorporation into bacterial lipopolysaccharide in Gram-negative bacteria. The polypeptide is 3-deoxy-manno-octulosonate cytidylyltransferase (Histophilus somni (strain 129Pt) (Haemophilus somnus)).